The following is a 536-amino-acid chain: MEFSSPSREECPKPSGRVNIMAGSLTGLLLLQAVSWASGARPCIPKSFGYSSVVCVCNATYCDSLDPLTFPALGTFSRYESTRSGRRMELSTGTIQANHTGTGLLLTLQPEQKFQKVKGFGGAMTDAAALNILALSPPAQNLLLKSYFSEEGIGYNIIRVPMASCDFSIRTYTYADTPDDFQLHNFSLPEEDTKLKIPLIHRALQLARRPVSLLASPWTSPTWLKTNGAVNGKGSLKGQPGDIYHQTWARYFVKFLDAYAEHKLQFWAVTAENEPSAGLLSGYPFQCLGFTPEHQRDFIARDLGPTLANSTHHNVRLLMLDDQRLLLPHWAKVVLTDPEAAKYVHGIAVHWYLDFLAPAKATLGETHHLFPNTMLFASEACVGSKFWEQSVRLGSWDRGMQYSHSIITNLLYHVVGWTDWNLALNPEGGPNWVRNFVDSPIIVDITKDTFYKQPMFYHLGHFSKFIPEGSQRVGLVASQKNDLDTVALMHPDGSAVVVVLNRSSKDVPLTIKDPAVGFLETISPGYSIHTYLWRRQ.

The signal sequence occupies residues 1–39 (MEFSSPSREECPKPSGRVNIMAGSLTGLLLLQAVSWASG). 2 disulfide bridges follow: Cys43/Cys55 and Cys57/Cys62. N-linked (GlcNAc...) asparagine glycans are attached at residues Asn58, Asn98, and Asn185. The active-site Proton donor is the Glu274. Asn309 carries N-linked (GlcNAc...) asparagine glycosylation. Glu379 (nucleophile) is an active-site residue. A glycan (N-linked (GlcNAc...) asparagine) is linked at Asn501.

It belongs to the glycosyl hydrolase 30 family. Interacts with saposin-C. Interacts with SCARB2. Interacts with TCP1. Interacts with GRN; this interaction prevents aggregation of GBA1-SCARB2 complex via interaction with HSPA1A upon stress.

Its subcellular location is the lysosome membrane. It carries out the reaction a beta-D-glucosyl-(1&lt;-&gt;1')-N-acylsphing-4-enine + H2O = an N-acylsphing-4-enine + D-glucose. The catalysed reaction is a beta-D-galactosyl-(1&lt;-&gt;1')-N-acylsphing-4-enine + H2O = an N-acylsphing-4-enine + D-galactose. The enzyme catalyses cholesteryl 3-beta-D-glucoside + H2O = cholesterol + D-glucose. It catalyses the reaction a beta-D-glucosyl-(1&lt;-&gt;1')-N-acylsphing-4-enine + cholesterol = cholesteryl 3-beta-D-glucoside + an N-acylsphing-4-enine. It carries out the reaction beta-D-glucosyl-N-(9Z-octadecenoyl)-sphing-4E-enine + cholesterol = N-(9Z-octadecenoyl)-sphing-4-enine + cholesteryl 3-beta-D-glucoside. The catalysed reaction is beta-D-glucosyl-N-octanoylsphing-4E-enine + cholesterol = N-octanoylsphing-4-enine + cholesteryl 3-beta-D-glucoside. The enzyme catalyses beta-D-glucosyl-N-dodecanoylsphing-4-enine + cholesterol = N-dodecanoylsphing-4-enine + cholesteryl 3-beta-D-glucoside. It catalyses the reaction beta-D-glucosyl-(1&lt;-&gt;1)-N-octadecanoylsphing-4-enine + cholesterol = N-octadecanoylsphing-4-enine + cholesteryl 3-beta-D-glucoside. It carries out the reaction beta-D-glucosyl-(1&lt;-&gt;1')-N-(15Z-tetracosenoyl)-sphing-4-enine + cholesterol = N-(15Z-tetracosenoyl)-sphing-4-enine + cholesteryl 3-beta-D-glucoside. The catalysed reaction is a beta-D-galactosyl-(1&lt;-&gt;1')-N-acylsphing-4-enine + cholesterol = cholesteryl 3-beta-D-galactoside + an N-acylsphing-4-enine. The enzyme catalyses 1-(beta-D-galactosyl)-N-dodecanoylsphing-4-enine + cholesterol = cholesteryl 3-beta-D-galactoside + N-dodecanoylsphing-4-enine. It catalyses the reaction a beta-D-xylosyl-(1&lt;-&gt;1')-N-acylsphing-4-enine + cholesterol = cholesteryl 3-beta-D-xyloside + an N-acylsphing-4-enine. It carries out the reaction beta-D-xylosyl-(1&lt;-&gt;1')-N-(9Z-octadecenoyl)-sphing-4-enine + cholesterol = cholesteryl 3-beta-D-xyloside + N-(9Z-octadecenoyl)-sphing-4-enine. Its pathway is steroid metabolism; cholesterol metabolism. The protein operates within sphingolipid metabolism. Glucosylceramidase that catalyzes, within the lysosomal compartment, the hydrolysis of glucosylceramides/GlcCers (such as beta-D-glucosyl-(1&lt;-&gt;1')-N-acylsphing-4-enine) into free ceramides (such as N-acylsphing-4-enine) and glucose. Plays a central role in the degradation of complex lipids and the turnover of cellular membranes. Through the production of ceramides, participates in the PKC-activated salvage pathway of ceramide formation. Catalyzes the glucosylation of cholesterol, through a transglucosylation reaction where glucose is transferred from GlcCer to cholesterol. GlcCer containing mono-unsaturated fatty acids (such as beta-D-glucosyl-N-(9Z-octadecenoyl)-sphing-4-enine) are preferred as glucose donors for cholesterol glucosylation when compared with GlcCer containing same chain length of saturated fatty acids (such as beta-D-glucosyl-N-octadecanoyl-sphing-4-enine). Under specific conditions, may alternatively catalyze the reverse reaction, transferring glucose from cholesteryl 3-beta-D-glucoside to ceramide. Can also hydrolyze cholesteryl 3-beta-D-glucoside producing glucose and cholesterol. Catalyzes the hydrolysis of galactosylceramides/GalCers (such as beta-D-galactosyl-(1&lt;-&gt;1')-N-acylsphing-4-enine), as well as the transfer of galactose between GalCers and cholesterol in vitro, but with lower activity than with GlcCers. Contrary to GlcCer and GalCer, xylosylceramide/XylCer (such as beta-D-xyosyl-(1&lt;-&gt;1')-N-acylsphing-4-enine) is not a good substrate for hydrolysis, however it is a good xylose donor for transxylosylation activity to form cholesteryl 3-beta-D-xyloside. In Pongo abelii (Sumatran orangutan), this protein is Lysosomal acid glucosylceramidase (GBA1).